Reading from the N-terminus, the 439-residue chain is Glutamyl-tRNA reductase (439 aa).

Substrate-binding positions include 46–49, Ser-111, 116–118, and Gln-122; these read TCNR and EGE. Catalysis depends on Cys-47, which acts as the Nucleophile. 191–196 lines the NADP(+) pocket; that stretch reads GTGAYA.

The protein belongs to the glutamyl-tRNA reductase family. Homodimer.

It carries out the reaction (S)-4-amino-5-oxopentanoate + tRNA(Glu) + NADP(+) = L-glutamyl-tRNA(Glu) + NADPH + H(+). Its pathway is porphyrin-containing compound metabolism; protoporphyrin-IX biosynthesis; 5-aminolevulinate from L-glutamyl-tRNA(Glu): step 1/2. Catalyzes the NADPH-dependent reduction of glutamyl-tRNA(Glu) to glutamate 1-semialdehyde (GSA). This is Glutamyl-tRNA reductase from Clavibacter michiganensis subsp. michiganensis (strain NCPPB 382).